Consider the following 402-residue polypeptide: Succinyl-CoA--D-citramalate CoA-transferase (402 aa).

The active-site Nucleophile is the aspartate 174.

Belongs to the CoA-transferase III family. Homodimer.

The catalysed reaction is (3R)-citramalate + succinyl-CoA = (3R)-citramalyl-CoA + succinate. It carries out the reaction (R)-malate + succinyl-CoA = (R)-malyl-CoA + succinate. In terms of biological role, involved in the 3-hydroxypropionate cycle used for autotrophic carbon dioxide fixation, and in the glyoxylate assimilation cycle used to regenerate acetyl-CoA and produce pyruvate as universal precursor for biosynthesis. Catalyzes the transfer of CoA moiety from succinyl-CoA to D-citramalate to yield citramalyl-CoA. The sequence is that of Succinyl-CoA--D-citramalate CoA-transferase from Chloroflexus aurantiacus (strain ATCC 29366 / DSM 635 / J-10-fl).